Here is a 484-residue protein sequence, read N- to C-terminus: Suppressor of fused homolog (484 aa).

The interval 1-24 (MAELRPSGAPGPTAPPAPGPTAPP) is disordered. Positions 12-23 (PTAPPAPGPTAP) are enriched in pro residues. Lys-257 is covalently cross-linked (Glycyl lysine isopeptide (Lys-Gly) (interchain with G-Cter in ubiquitin)). The tract at residues 279-360 (SRPPEDDEDS…SSTAIIPHEL (82 aa)) is disordered. A Phosphoserine modification is found at Ser-301. Residue Lys-303 is modified to N6-acetyllysine. Lys-321 participates in a covalent cross-link: Glycyl lysine isopeptide (Lys-Gly) (interchain with G-Cter in SUMO2). The segment covering 336 to 347 (AHDRAPSRKDSL) has biased composition (basic and acidic residues). Residues Ser-342, Ser-346, and Ser-352 each carry the phosphoserine modification. Thr-353 bears the Phosphothreonine mark. Position 481 is a phosphoserine (Ser-481).

This sequence belongs to the SUFU family. May form homodimers. Part of a DNA-bound corepressor complex containing SAP18, GLI1 and SIN3. Part of a complex containing CTNNB1. Binds BTRC, GLI2, GLI3, SAP18 and STK36. Binds both free and DNA-bound GLI1. Interacts with KIF7. Interacts with GLI3FL and this interaction regulates the formation of either repressor or activator forms of GLI3. Its association with GLI3FL is regulated by Hh signaling and dissociation of the SUFU-GLI3 interaction requires the presence of the ciliary motor KIF3A. Interacts with ULK3; inactivating the protein kinase activity of ULK3. Interacts with RAB23. Polyubiquitinated at Lys-257 by the SCF(FBXL17) complex, leading to its subsequent degradation and allowing the release of GLI1 for proper hedgehog/smoothened signal transduction. Ubiquitination is impaired by phosphorylation at Ser-342, Ser-346, Ser-352 and Thr-353. In terms of processing, phosphorylation at Ser-342, Ser-346, Ser-352 and Thr-353 prevents ubiquitination by the SCF(FBXL17) complex. Ubiquitous in adult tissues. Detected in osteoblasts of the perichondrium in the developing limb of 12-week old embryos. Isoform 1 is detected in fetal brain, lung, kidney and testis. Isoform 2 is detected in fetal testis, and at much lower levels in fetal brain, lung and kidney.

The protein resides in the cytoplasm. It localises to the nucleus. Functionally, negative regulator in the hedgehog/smoothened signaling pathway. Down-regulates GLI1-mediated transactivation of target genes. Down-regulates GLI2-mediated transactivation of target genes. Part of a corepressor complex that acts on DNA-bound GLI1. May also act by linking GLI1 to BTRC and thereby targeting GLI1 to degradation by the proteasome. Sequesters GLI1, GLI2 and GLI3 in the cytoplasm, this effect is overcome by binding of STK36 to both SUFU and a GLI protein. Negative regulator of beta-catenin signaling. Regulates the formation of either the repressor form (GLI3R) or the activator form (GLI3A) of the full-length form of GLI3 (GLI3FL). GLI3FL is complexed with SUFU in the cytoplasm and is maintained in a neutral state. Without the Hh signal, the SUFU-GLI3 complex is recruited to cilia, leading to the efficient processing of GLI3FL into GLI3R. When Hh signaling is initiated, SUFU dissociates from GLI3FL and the latter translocates to the nucleus, where it is phosphorylated, destabilized, and converted to a transcriptional activator (GLI3A). Required for normal embryonic development. Required for the proper formation of hair follicles and the control of epidermal differentiation. This chain is Suppressor of fused homolog, found in Homo sapiens (Human).